The chain runs to 490 residues: Fumitremorgin C monooxygenase (490 aa).

Residues 12-32 (LGVVGASLIVILGIILLFPLG) form a helical membrane-spanning segment. Position 442 (Cys442) interacts with heme.

Belongs to the cytochrome P450 family. The cofactor is heme.

It is found in the membrane. It catalyses the reaction fumitremorgin C + 2 reduced [NADPH--hemoprotein reductase] + 2 O2 = 12alpha,13alpha-dihydroxyfumitremorgin C + 2 oxidized [NADPH--hemoprotein reductase] + 2 H2O + 2 H(+). Its pathway is mycotoxin biosynthesis. In terms of biological role, cytochrome P450 monooxygenase; part of the gene cluster that mediates the biosynthesis of fumitremorgins, indole alkaloids that carry not only intriguing chemical structures, but also interesting biological and pharmacological activities. The biosynthesis of fumitremorgin-type alkaloids begins by condensation of the two amino acids L-tryptophan and L-proline to brevianamide F, catalyzed by the non-ribosomal peptide synthetase ftmA. Brevianamide F is then prenylated by the prenyltransferase ftmPT1/ftmB in the presence of dimethylallyl diphosphate, resulting in the formation of tryprostatin B. The three cytochrome P450 monooxygenases, ftmP450-1/ftmC, ftmP450-2/ftmE and ftmP450-3/FtmG, are responsible for the conversion of tryprostatin B to 6-hydroxytryprostatin B, tryprostatin A to fumitremorgin C and fumitremorgin C to 12,13-dihydroxyfumitremorgin C, respectively. The putative methyltransferase ftmMT/ftmD is expected for the conversion of 6-hydroxytryprostatin B to tryprostatin A. FtmPT2/FtmH catalyzes the prenylation of 12,13-dihydroxyfumitre-morgin C in the presence of dimethylallyl diphosphate, resulting in the formation of fumitremorgin B. Fumitremorgin B is further converted to verruculogen by ftmOx1/ftmF via the insertion of an endoperoxide bond between the two prenyl moieties. In some fungal species, verruculogen is further converted to fumitremorgin A, but the enzymes involved in this step have not been identified yet. The polypeptide is Fumitremorgin C monooxygenase (Aspergillus fumigatus (strain ATCC MYA-4609 / CBS 101355 / FGSC A1100 / Af293) (Neosartorya fumigata)).